The following is a 230-amino-acid chain: LexA repressor (230 aa).

Positions 28 to 48 form a DNA-binding region, H-T-H motif; that stretch reads IREIGEALDIRSTNGVNDHLK. Active-site for autocatalytic cleavage activity residues include Ser148 and Lys185.

It belongs to the peptidase S24 family. As to quaternary structure, homodimer.

It catalyses the reaction Hydrolysis of Ala-|-Gly bond in repressor LexA.. Functionally, represses a number of genes involved in the response to DNA damage (SOS response), including recA and lexA. In the presence of single-stranded DNA, RecA interacts with LexA causing an autocatalytic cleavage which disrupts the DNA-binding part of LexA, leading to derepression of the SOS regulon and eventually DNA repair. This is LexA repressor from Anaeromyxobacter sp. (strain K).